The chain runs to 447 residues: Trigger factor (447 aa).

One can recognise a PPIase FKBP-type domain in the interval 164–249; that stretch reads GDLVVIDFIG…VKEVKQAVVP (86 aa).

The protein belongs to the FKBP-type PPIase family. Tig subfamily.

The protein localises to the cytoplasm. It carries out the reaction [protein]-peptidylproline (omega=180) = [protein]-peptidylproline (omega=0). Involved in protein export. Acts as a chaperone by maintaining the newly synthesized protein in an open conformation. Functions as a peptidyl-prolyl cis-trans isomerase. The sequence is that of Trigger factor from Rhodospirillum rubrum (strain ATCC 11170 / ATH 1.1.1 / DSM 467 / LMG 4362 / NCIMB 8255 / S1).